Consider the following 416-residue polypeptide: L-lysine 2,3-aminomutase (416 aa).

A Radical SAM core domain is found at 111–322; it reads HRYPDRVLLL…EGLRGHTSGY (212 aa). [4Fe-4S] cluster is bound by residues C125, C129, and C132. C268 is a binding site for Zn(2+). K337 carries the post-translational modification N6-(pyridoxal phosphate)lysine. Zn(2+) is bound by residues C375, C377, and C380.

The protein belongs to the radical SAM superfamily. KamA family. In terms of assembly, homohexamer; trimer of dimers. Forms a homotetramer in crystal. [4Fe-4S] cluster is required as a cofactor. The cofactor is pyridoxal 5'-phosphate. It depends on Co(2+) as a cofactor. Requires Zn(2+) as cofactor.

The enzyme catalyses L-lysine = (3S)-3,6-diaminohexanoate. Its pathway is amino-acid degradation; L-lysine degradation via acetate pathway. With respect to regulation, the enzyme is activated by S-adenosyl-methionine. Activity is dependent on the levels of Fe(2+), S(2-) and Co(2+). Activity is stimulated by addition of EDTA. S-adenosylhomocysteine competitively inhibits the activity whereas 5'-methylthioadenosine is not inhibitory in the presence of S-adenosylmethionine. Competitively inhibited by 4-thialysine. Inhibited by sodium borohydride (1 mM) when added with 2 mM dithionate. Moderately inhibited by beta-mercaptoethanol (30 mM) along with dithionate. Higher concentrations of Fe(2+) partially inhibit the activity and Co(2+) at 1 mM is a strong inhibitor. Hydroxylamine, isonicotinic acid hydrazide inhibit effectively, in addition, hydrazine, D-penicillamine and D-cycloserine are also inhibitory at high concentrations. Its function is as follows. Catalyzes the interconversion of L-alpha-lysine and L-beta-lysine. The chain is L-lysine 2,3-aminomutase (kamA) from Clostridium subterminale.